A 227-amino-acid polypeptide reads, in one-letter code: Cytochrome c oxidase subunit 2 (227 aa).

Residues 1–14 (MAHAAQVGLQDATS) lie on the Mitochondrial intermembrane side of the membrane. Residues 15-45 (PIMEELIIFHDHALMIIFLICFLVLYALFLT) form a helical membrane-spanning segment. Residues 46–59 (LTTKLTNTSISDAQ) are Mitochondrial matrix-facing. A helical transmembrane segment spans residues 60–87 (EMETVWTILPAIILVLIALPSLRILYMT). At 88–227 (DEVNDPSFTI…IFEMGPVFTL (140 aa)) the chain is on the mitochondrial intermembrane side. The Cu cation site is built by H161, C196, E198, C200, H204, and M207. E198 provides a ligand contact to Mg(2+).

The protein belongs to the cytochrome c oxidase subunit 2 family. In terms of assembly, component of the cytochrome c oxidase (complex IV, CIV), a multisubunit enzyme composed of 14 subunits. The complex is composed of a catalytic core of 3 subunits MT-CO1, MT-CO2 and MT-CO3, encoded in the mitochondrial DNA, and 11 supernumerary subunits COX4I, COX5A, COX5B, COX6A, COX6B, COX6C, COX7A, COX7B, COX7C, COX8 and NDUFA4, which are encoded in the nuclear genome. The complex exists as a monomer or a dimer and forms supercomplexes (SCs) in the inner mitochondrial membrane with NADH-ubiquinone oxidoreductase (complex I, CI) and ubiquinol-cytochrome c oxidoreductase (cytochrome b-c1 complex, complex III, CIII), resulting in different assemblies (supercomplex SCI(1)III(2)IV(1) and megacomplex MCI(2)III(2)IV(2)). Found in a complex with TMEM177, COA6, COX18, COX20, SCO1 and SCO2. Interacts with TMEM177 in a COX20-dependent manner. Interacts with COX20. Interacts with COX16. Requires Cu cation as cofactor.

Its subcellular location is the mitochondrion inner membrane. It carries out the reaction 4 Fe(II)-[cytochrome c] + O2 + 8 H(+)(in) = 4 Fe(III)-[cytochrome c] + 2 H2O + 4 H(+)(out). Its function is as follows. Component of the cytochrome c oxidase, the last enzyme in the mitochondrial electron transport chain which drives oxidative phosphorylation. The respiratory chain contains 3 multisubunit complexes succinate dehydrogenase (complex II, CII), ubiquinol-cytochrome c oxidoreductase (cytochrome b-c1 complex, complex III, CIII) and cytochrome c oxidase (complex IV, CIV), that cooperate to transfer electrons derived from NADH and succinate to molecular oxygen, creating an electrochemical gradient over the inner membrane that drives transmembrane transport and the ATP synthase. Cytochrome c oxidase is the component of the respiratory chain that catalyzes the reduction of oxygen to water. Electrons originating from reduced cytochrome c in the intermembrane space (IMS) are transferred via the dinuclear copper A center (CU(A)) of subunit 2 and heme A of subunit 1 to the active site in subunit 1, a binuclear center (BNC) formed by heme A3 and copper B (CU(B)). The BNC reduces molecular oxygen to 2 water molecules using 4 electrons from cytochrome c in the IMS and 4 protons from the mitochondrial matrix. In Pan troglodytes (Chimpanzee), this protein is Cytochrome c oxidase subunit 2 (MT-CO2).